Consider the following 219-residue polypeptide: Large ribosomal subunit protein bL25 (219 aa).

The segment at 176–219 (VTVVPPTDEPSEEEVEAMEGESATEEPEVVDEDKEDDEEENKED) is disordered. Over residues 184–219 (EPSEEEVEAMEGESATEEPEVVDEDKEDDEEENKED) the composition is skewed to acidic residues.

It belongs to the bacterial ribosomal protein bL25 family. CTC subfamily. Part of the 50S ribosomal subunit; part of the 5S rRNA/L5/L18/L25 subcomplex. Contacts the 5S rRNA. Binds to the 5S rRNA independently of L5 and L18.

Functionally, this is one of the proteins that binds to the 5S RNA in the ribosome where it forms part of the central protuberance. The sequence is that of Large ribosomal subunit protein bL25 from Staphylococcus epidermidis (strain ATCC 12228 / FDA PCI 1200).